Consider the following 229-residue polypeptide: Apoptosis regulator Bcl-2 (229 aa).

The BH4 motif lies at 10-30 (DNREIVMKYIHYKLSQRGYEW). The tract at residues 30–82 (WDAGDAGAAPPGAAPAPGILSSQPGRTPAPSRTSPPPPPAAAAGPAPSPVPPV) is disordered. Residues 33-61 (GDAGAAPPGAAPAPGILSSQPGRTPAPSR) are compositionally biased toward low complexity. Thr62 carries the phosphothreonine; by MAPK8 modification. The span at 62-81 (TSPPPPPAAAAGPAPSPVPP) shows a compositional bias: pro residues. Residue Ser63 is modified to Phosphoserine; by MAPK8 and PKC. The residue at position 77 (Ser77) is a Phosphoserine; by MAPK8. Residues 83-97 (VHLTLRQAGDDFSRR) carry the BH3 motif. The short motif at 126-145 (ELFRDGVNWGRIVAFFEFGG) is the BH1 element. The short motif at 177–192 (TWIQDNGGWDAFVELY) is the BH2 element. A helical membrane pass occupies residues 202 to 223 (FSWLSLKALLSLALVGACITLG).

It belongs to the Bcl-2 family. As to quaternary structure, forms homodimers, and heterodimers with BAX, BAD, BAK and Bcl-X(L). Heterodimerization with BAX requires intact BH1 and BH2 motifs, and is necessary for anti-apoptotic activity. Component of the complex, at least composed of LRPPRC, BECN1 and BCL2; the interactions prevent BECN1 from forming an autophagy-inducing complex with PIK3C3. Interacts with EI24. Also interacts with APAF1, BBC3, BCL2L1, BNIPL, MRPL41 and TP53BP2. Binding to FKBP8 seems to target BCL2 to the mitochondria and probably interferes with the binding of BCL2 to its targets. Interacts with BAG1 in an ATP-dependent manner. Interacts with RAF1 (the 'Ser-338' and 'Ser-339' phosphorylated form). Interacts (via the BH4 domain) with EGLN3; the interaction prevents the formation of the BAX-BCL2 complex and inhibits the anti-apoptotic activity of BCL2. Interacts with G0S2; this interaction also prevents the formation of the anti-apoptotic BAX-BCL2 complex. Interacts with RTL10/BOP. Interacts with the SCF(FBXO10) complex. Interacts (via the loop between motifs BH4 and BH3) with NLRP1 (via LRR repeats), but not with NLRP2, NLRP3, NLRP4, PYCARD, nor MEFV. Interacts with GIMAP3/IAN4, GIMAP4/IAN1 and GIMAP5/IAN5. Interacts with BCAP31. Interacts with IRF3; the interaction is inhibited by Sendai virus infection. Interacts with BECN1; thereby inhibiting autophagy in non-starvation conditions. Interacts with AMBRA1; thereby inhibiting autophagy. Post-translationally, phosphorylation/dephosphorylation on Ser-63 regulates anti-apoptotic activity. Growth factor-stimulated phosphorylation on Ser-63 by PKC is required for the anti-apoptosis activity and occurs during the G2/M phase of the cell cycle. In the absence of growth factors, BCL2 appears to be phosphorylated by other protein kinases such as ERKs and stress-activated kinases. Phosphorylated by MAPK8/JNK1 at Thr-62, Ser-63 and Ser-77, which stimulates starvation-induced autophagy. Dephosphorylated by protein phosphatase 2A (PP2A). In terms of processing, proteolytically cleaved by caspases during apoptosis. The cleaved protein, lacking the BH4 motif, has pro-apoptotic activity, causes the release of cytochrome c into the cytosol promoting further caspase activity. Monoubiquitinated by PRKN, leading to an increase in its stability. Ubiquitinated by SCF(FBXO10), leading to its degradation by the proteasome.

It is found in the mitochondrion outer membrane. It localises to the nucleus membrane. Its subcellular location is the endoplasmic reticulum membrane. The protein resides in the cytoplasm. Its function is as follows. Suppresses apoptosis in a variety of cell systems including factor-dependent lymphohematopoietic and neural cells. Regulates cell death by controlling the mitochondrial membrane permeability. Appears to function in a feedback loop system with caspases. Inhibits caspase activity either by preventing the release of cytochrome c from the mitochondria and/or by binding to the apoptosis-activating factor (APAF-1). Also acts as an inhibitor of autophagy: interacts with BECN1 and AMBRA1 during non-starvation conditions and inhibits their autophagy function. May attenuate inflammation by impairing NLRP1-inflammasome activation, hence CASP1 activation and IL1B release. This Bos taurus (Bovine) protein is Apoptosis regulator Bcl-2 (BCL2).